The sequence spans 122 residues: Large ribosomal subunit protein uL14c (122 aa).

It belongs to the universal ribosomal protein uL14 family. Part of the 50S ribosomal subunit.

It localises to the plastid. It is found in the chloroplast. Its function is as follows. Binds to 23S rRNA. The protein is Large ribosomal subunit protein uL14c of Dioscorea elephantipes (Elephant's foot yam).